We begin with the raw amino-acid sequence, 226 residues long: Endonuclease NucS (226 aa).

Belongs to the NucS endonuclease family.

Its subcellular location is the cytoplasm. In terms of biological role, cleaves both 3' and 5' ssDNA extremities of branched DNA structures. This Mycobacterium tuberculosis (strain CDC 1551 / Oshkosh) protein is Endonuclease NucS.